Reading from the N-terminus, the 411-residue chain is Isocitrate dehydrogenase [NADP] peroxisomal (411 aa).

NADP(+) contacts are provided by residues 78-80 (TIT) and arginine 85. Residue threonine 80 participates in substrate binding. Substrate is bound by residues 97–103 (SPNGTLR), arginine 112, and arginine 135. Aspartate 254 contacts Mn(2+). Lysine 262 lines the NADP(+) pocket. Mn(2+) is bound at residue aspartate 277. Residues 312 to 317 (GTVTRH) and asparagine 330 each bind NADP(+).

The protein belongs to the isocitrate and isopropylmalate dehydrogenases family. Requires Mg(2+) as cofactor. Mn(2+) serves as cofactor.

The protein resides in the peroxisome. The catalysed reaction is D-threo-isocitrate + NADP(+) = 2-oxoglutarate + CO2 + NADPH. Functionally, may play a role in N-alkane metabolism, glutamate synthesis, and/or NADPH generation in the peroxisomes. This is Isocitrate dehydrogenase [NADP] peroxisomal (IDP2) from Candida tropicalis (Yeast).